Reading from the N-terminus, the 244-residue chain is Sperm-egg fusion protein Juno (244 aa).

The N-terminal stretch at 1–19 (MAQWWQILLGLWAVLPTLA) is a signal peptide. Cystine bridges form between Cys27/Cys55, Cys47/Cys95, Cys56/Cys99, Cys79/Cys166, Cys86/Cys137, Cys126/Cys200, Cys130/Cys180, and Cys143/Cys160. Positions 62–81 (WEAHLEEPLLFNFSMMHCGL) are important for interaction with IZUMO1. The N-linked (GlcNAc...) asparagine glycan is linked to Asn73. An N-linked (GlcNAc...) asparagine glycan is attached at Asn185. The GPI-anchor amidated glycine moiety is linked to residue Gly222. Residues 223–244 (SALAPQLSYTLPAFSLCLLFHP) constitute a propeptide that is removed on maturation.

This sequence belongs to the folate receptor family. In terms of assembly, monomer. Interacts with IZUMO1; the interaction is direct. IZUMO1 and IZUMO1R/JUNO form a complex with 1:1 stoichiometry. Interacts with WDR54. The protein is rapidly cleaved following fertilization, being only weakly detectable in zona-intact fertilized eggs at telophase II and undetectable at the pronuclear stage. Sheding is probably required to block to polyspermy and ensuring egg fusion with a single sperm. In terms of tissue distribution, widely expressed with higher expression in thymus, spleen and lung. Present at the cell surface of unfertilized oocytes, while it is barely detectable 30 to 40 minutes after fertilization (at protein level).

It is found in the cell membrane. Functionally, receptor for IZUMO1 present at the cell surface of oocytes (oolemma), which is essential for species-specific gamete recognition and fertilization. The IZUMO1:IZUMO1R/JUNO interaction is a necessary adhesion event between sperm and egg that is required for fertilization but is not sufficient for cell fusion. The ligand-receptor interaction probably does not act as a membrane 'fusogen'. Does not bind folate. This Mus musculus (Mouse) protein is Sperm-egg fusion protein Juno.